Reading from the N-terminus, the 325-residue chain is D site-binding protein (325 aa).

Disordered stretches follow at residues 1–98, 124–203, and 230–256; these read MARP…AGPS, LEHG…EVLM, and FSEE…QKDE. Gly residues predominate over residues 17–28; sequence GPAGAPPGGGAL. Residues 71-80 show a composition bias toward low complexity; the sequence is AGPADAPSGA. Ser86 is subject to Phosphoserine. Positions 88-98 are enriched in low complexity; the sequence is RGRSGPVAGPS. A compositionally biased stretch (pro residues) spans 129–153; sequence PPSPPPPGGLSPAPSPARTPAPSPG. A compositionally biased stretch (low complexity) spans 154–171; the sequence is PGSCSSSSPRSSPGHAPA. One can recognise a bZIP domain in the interval 255 to 318; it reads DEKYWSRRYK…SHYRAVLSRY (64 aa). Residues 257 to 279 are basic motif; sequence KYWSRRYKNNEAAKRSRDARRLK. The tract at residues 283–297 is leucine-zipper; sequence ISVRAAFLEKENALL.

This sequence belongs to the bZIP family. PAR subfamily. Binds DNA as a homodimer or a heterodimer. Can form a heterodimer with TEF. Expressed in the suprachiasmatic nuclei (SCN) and in most peripheral tissues, with a strong circadian rhythmicity.

The protein localises to the nucleus. Its function is as follows. This transcriptional activator recognizes and binds to the sequence 5'-RTTAYGTAAY-3' found in the promoter of genes such as albumin, CYP2A4 and CYP2A5. It is not essential for circadian rhythm generation, but modulates important clock output genes. May be a direct target for regulation by the circadian pacemaker component clock. May affect circadian period and sleep regulation. This chain is D site-binding protein (Dbp), found in Mus musculus (Mouse).